Here is a 566-residue protein sequence, read N- to C-terminus: CTP synthase (566 aa).

The interval 1–265 (MTKYVFVTGG…DEIVCHKLNL (265 aa)) is amidoligase domain. Residue Ser-13 coordinates CTP. Residue Ser-13 coordinates UTP. Residues 14-19 (SLGKGI) and Asp-71 each bind ATP. Mg(2+) contacts are provided by Asp-71 and Glu-139. CTP-binding positions include 146–148 (DIE), 186–191 (KTKPTQ), and Lys-222. UTP contacts are provided by residues 186-191 (KTKPTQ) and Lys-222. A Glutamine amidotransferase type-1 domain is found at 290 to 543 (EIALVGKYVD…IEAAAVFADK (254 aa)). Position 351 (Gly-351) interacts with L-glutamine. Cys-378 serves as the catalytic Nucleophile; for glutamine hydrolysis. L-glutamine contacts are provided by residues 379 to 382 (LGMQ), Glu-402, and Arg-469. Active-site residues include His-516 and Glu-518. A disordered region spans residues 545–566 (PSSEGAISADKPERTTTGAYIQ).

Belongs to the CTP synthase family. Homotetramer.

The catalysed reaction is UTP + L-glutamine + ATP + H2O = CTP + L-glutamate + ADP + phosphate + 2 H(+). It carries out the reaction L-glutamine + H2O = L-glutamate + NH4(+). It catalyses the reaction UTP + NH4(+) + ATP = CTP + ADP + phosphate + 2 H(+). It participates in pyrimidine metabolism; CTP biosynthesis via de novo pathway; CTP from UDP: step 2/2. With respect to regulation, allosterically activated by GTP, when glutamine is the substrate; GTP has no effect on the reaction when ammonia is the substrate. The allosteric effector GTP functions by stabilizing the protein conformation that binds the tetrahedral intermediate(s) formed during glutamine hydrolysis. Inhibited by the product CTP, via allosteric rather than competitive inhibition. Catalyzes the ATP-dependent amination of UTP to CTP with either L-glutamine or ammonia as the source of nitrogen. Regulates intracellular CTP levels through interactions with the four ribonucleotide triphosphates. The protein is CTP synthase of Nitrosospira multiformis (strain ATCC 25196 / NCIMB 11849 / C 71).